Consider the following 140-residue polypeptide: Nucleoside diphosphate kinase (140 aa).

Positions 11, 59, 87, 93, 104, and 114 each coordinate ATP. His117 (pros-phosphohistidine intermediate) is an active-site residue.

This sequence belongs to the NDK family. In terms of assembly, homotetramer. Mg(2+) is required as a cofactor.

It is found in the cytoplasm. The catalysed reaction is a 2'-deoxyribonucleoside 5'-diphosphate + ATP = a 2'-deoxyribonucleoside 5'-triphosphate + ADP. It catalyses the reaction a ribonucleoside 5'-diphosphate + ATP = a ribonucleoside 5'-triphosphate + ADP. In terms of biological role, major role in the synthesis of nucleoside triphosphates other than ATP. The ATP gamma phosphate is transferred to the NDP beta phosphate via a ping-pong mechanism, using a phosphorylated active-site intermediate. The polypeptide is Nucleoside diphosphate kinase (Rhodospirillum rubrum (strain ATCC 11170 / ATH 1.1.1 / DSM 467 / LMG 4362 / NCIMB 8255 / S1)).